The following is a 44-amino-acid chain: DNA-directed RNA polymerase subunit Rpo12 (44 aa).

Residues Cys-8, Cys-22, and Cys-25 each coordinate Zn(2+).

Belongs to the archaeal Rpo12/eukaryotic RPC10 RNA polymerase subunit family. In terms of assembly, part of the RNA polymerase complex. Requires Zn(2+) as cofactor.

Its subcellular location is the cytoplasm. The enzyme catalyses RNA(n) + a ribonucleoside 5'-triphosphate = RNA(n+1) + diphosphate. In terms of biological role, DNA-dependent RNA polymerase (RNAP) catalyzes the transcription of DNA into RNA using the four ribonucleoside triphosphates as substrates. The polypeptide is DNA-directed RNA polymerase subunit Rpo12 (Haloquadratum walsbyi (strain DSM 16790 / HBSQ001)).